The sequence spans 307 residues: NADH-ubiquinone oxidoreductase chain 2 (307 aa).

A run of 10 helical transmembrane segments spans residues 1 to 21, 25 to 45, 58 to 78, 88 to 108, 119 to 139, 144 to 164, 193 to 213, 217 to 237, 250 to 270, and 287 to 307; these read MTLQSVLLGAMIILGPILSMT, WIIIWIGLEISLLGFVSYYML, YFLIQSVSSTVMLLNGLYIFV, FIFITMLMLKIGMFPLHFWII, IGIVGLLLKIVPMWILMHMGC, MLNLITMLSVTSMLFGALIGM, LFKYFITYGFSLVILLVFLYL, MSISLSLLSLSGLPPFMLFIG, LWFIVLVFAILSAVISLVYYL, and HYKMAMFLLVNVTFGMLLFLT.

Belongs to the complex I subunit 2 family.

The protein localises to the mitochondrion inner membrane. The catalysed reaction is a ubiquinone + NADH + 5 H(+)(in) = a ubiquinol + NAD(+) + 4 H(+)(out). Its function is as follows. Core subunit of the mitochondrial membrane respiratory chain NADH dehydrogenase (Complex I) that is believed to belong to the minimal assembly required for catalysis. Complex I functions in the transfer of electrons from NADH to the respiratory chain. The immediate electron acceptor for the enzyme is believed to be ubiquinone. This is NADH-ubiquinone oxidoreductase chain 2 (ND2) from Albinaria caerulea (Land snail).